We begin with the raw amino-acid sequence, 595 residues long: Flap endonuclease 1 (595 aa).

The interval 1–106 (MGIKGLTKFI…SELEKRGEKR (106 aa)) is N-domain. Residue Asp-34 participates in Mg(2+) binding. Residues Arg-47 and Arg-72 each coordinate DNA. The Mg(2+) site is built by Asp-88, Glu-160, Glu-162, Asp-181, and Asp-183. The I-domain stretch occupies residues 124 to 267 (EIKKQSGRTV…KTAYNLIKEY (144 aa)). Residue Glu-160 coordinates DNA. The DNA site is built by Gly-245 and Asp-247. Mg(2+) is bound at residue Asp-247. The segment at 350 to 358 (TQRRLDNFF) is interaction with PCNA. A disordered region spans residues 370 to 493 (NEESQIKKEV…TGDVYSFPNG (124 aa)). Polar residues predominate over residues 392 to 401 (NDSSTKLNSK). Residues 406 to 425 (PKGEKESKTEKDDGDTHNGN) show a composition bias toward basic and acidic residues. The span at 426-436 (DNEEEGGEGET) shows a compositional bias: acidic residues. The span at 461–475 (HKSDSESGNVKKEST) shows a compositional bias: basic and acidic residues.

This sequence belongs to the XPG/RAD2 endonuclease family. FEN1 subfamily. Interacts with PCNA. Three molecules of FEN1 bind to one PCNA trimer with each molecule binding to one PCNA monomer. PCNA stimulates the nuclease activity without altering cleavage specificity. Requires Mg(2+) as cofactor. In terms of processing, phosphorylated. Phosphorylation upon DNA damage induces relocalization to the nuclear plasma.

Its subcellular location is the nucleus. It is found in the nucleolus. It localises to the nucleoplasm. The protein localises to the mitochondrion. Functionally, structure-specific nuclease with 5'-flap endonuclease and 5'-3' exonuclease activities involved in DNA replication and repair. During DNA replication, cleaves the 5'-overhanging flap structure that is generated by displacement synthesis when DNA polymerase encounters the 5'-end of a downstream Okazaki fragment. It enters the flap from the 5'-end and then tracks to cleave the flap base, leaving a nick for ligation. Also involved in the long patch base excision repair (LP-BER) pathway, by cleaving within the apurinic/apyrimidinic (AP) site-terminated flap. Acts as a genome stabilization factor that prevents flaps from equilibrating into structures that lead to duplications and deletions. Also possesses 5'-3' exonuclease activity on nicked or gapped double-stranded DNA, and exhibits RNase H activity. Also involved in replication and repair of rDNA and in repairing mitochondrial DNA. This chain is Flap endonuclease 1, found in Plasmodium knowlesi (strain H).